Reading from the N-terminus, the 443-residue chain is UDP-N-acetylmuramate--L-alanine ligase (443 aa).

Residue 110-116 (GAHGKTS) coordinates ATP.

It belongs to the MurCDEF family.

It localises to the cytoplasm. It catalyses the reaction UDP-N-acetyl-alpha-D-muramate + L-alanine + ATP = UDP-N-acetyl-alpha-D-muramoyl-L-alanine + ADP + phosphate + H(+). It participates in cell wall biogenesis; peptidoglycan biosynthesis. Cell wall formation. In Lactococcus lactis subsp. lactis (strain IL1403) (Streptococcus lactis), this protein is UDP-N-acetylmuramate--L-alanine ligase.